The chain runs to 435 residues: Maltodextrin transport system permease protein MdxF (435 aa).

A run of 8 helical transmembrane segments spans residues 35–55, 73–93, 136–156, 199–219, 234–254, 293–313, 337–357, and 403–423; these read LLFLAITGLFAFELCVFGIQA, FMLIEGTLQLIVTMIFLMFYI, AYIMMVFVIIFPVLVTLFVAL, VIWTICATTLQIILGIVTALF, IFLFPWAVPAFITIMSFSNMF, LIMIQTWLGFPYIYVMVTGVL, HITFPMILFATAPVMITQYTF, and VAAAVTLLISFIVIGISLIAF. Residues 195-422 form the ABC transmembrane type-1 domain; the sequence is LGWTVIWTIC…FIVIGISLIA (228 aa).

This sequence belongs to the binding-protein-dependent transport system permease family. MalFG subfamily. In terms of assembly, the complex is composed of two ATP-binding proteins (MsmX), two transmembrane proteins (MdxF and MdxG) and a solute-binding protein (MdxE).

Its subcellular location is the cell membrane. Part of the ABC transporter complex involved in maltodextrin import. Probably responsible for the translocation of the substrate across the membrane. The protein is Maltodextrin transport system permease protein MdxF (mdxF) of Bacillus subtilis (strain 168).